The primary structure comprises 435 residues: CBL-interacting protein kinase 28 (435 aa).

One can recognise a Protein kinase domain in the interval 11-265 (YVIGRQLGQG…ISRIKRSAWY (255 aa)). Residues 17–25 (LGQGTFGKV) and Lys-40 contribute to the ATP site. The active-site Proton acceptor is Asp-133. The interval 151-180 (DFGLSALAESRRQDGLLHTACGTPAYVAPE) is activation loop. The region spanning 283–329 (CTSEAPFSGPTICISSERNQEPPNLHNLNAFDIISLSTGFDLSGLFG) is the NAF domain. The PPI stretch occupies residues 334 to 363 (RRESLFTSRKPAAAVLVKLKELAKALNLKV).

Belongs to the protein kinase superfamily. CAMK Ser/Thr protein kinase family. SNF1 subfamily. It depends on Mn(2+) as a cofactor.

The enzyme catalyses L-seryl-[protein] + ATP = O-phospho-L-seryl-[protein] + ADP + H(+). It catalyses the reaction L-threonyl-[protein] + ATP = O-phospho-L-threonyl-[protein] + ADP + H(+). In terms of biological role, CIPK serine-threonine protein kinases interact with CBL proteins. Binding of a CBL protein to the regulatory NAF domain of CIPK protein lead to the activation of the kinase in a calcium-dependent manner. This Oryza sativa subsp. japonica (Rice) protein is CBL-interacting protein kinase 28 (CIPK28).